Consider the following 296-residue polypeptide: Glycine--tRNA ligase alpha subunit (296 aa).

It belongs to the class-II aminoacyl-tRNA synthetase family. In terms of assembly, tetramer of two alpha and two beta subunits.

The protein resides in the cytoplasm. The enzyme catalyses tRNA(Gly) + glycine + ATP = glycyl-tRNA(Gly) + AMP + diphosphate. The polypeptide is Glycine--tRNA ligase alpha subunit (Polynucleobacter necessarius subsp. necessarius (strain STIR1)).